Here is a 59-residue protein sequence, read N- to C-terminus: Bacteriocin curvacin-A (59 aa).

Residues 1-18 (MNNVKELSMTELQTITGG) constitute a propeptide that is removed on maturation. A disulfide bridge links C28 with C33.

It belongs to the bacteriocin class IIA/YGNGV family.

The protein resides in the secreted. Bactericidal activity; inhibits closely related Lactobacilli, Listeria monocytogenes and ivanovvi, Enterococcus faecalis, Carnobacterium sp and Brocothrix thermosphacta. This Latilactobacillus curvatus (Lactobacillus curvatus) protein is Bacteriocin curvacin-A (curA).